The chain runs to 220 residues: Ribosomal RNA large subunit methyltransferase E (220 aa).

Glycine 60, tryptophan 62, aspartate 92, aspartate 108, and aspartate 133 together coordinate S-adenosyl-L-methionine. Residue lysine 173 is the Proton acceptor of the active site.

This sequence belongs to the class I-like SAM-binding methyltransferase superfamily. RNA methyltransferase RlmE family.

The protein resides in the cytoplasm. The enzyme catalyses uridine(2552) in 23S rRNA + S-adenosyl-L-methionine = 2'-O-methyluridine(2552) in 23S rRNA + S-adenosyl-L-homocysteine + H(+). Specifically methylates the uridine in position 2552 of 23S rRNA at the 2'-O position of the ribose in the fully assembled 50S ribosomal subunit. In Burkholderia multivorans (strain ATCC 17616 / 249), this protein is Ribosomal RNA large subunit methyltransferase E.